A 1378-amino-acid chain; its full sequence is DNA-directed RNA polymerase subunit beta (1378 aa).

The protein belongs to the RNA polymerase beta chain family. The RNAP catalytic core consists of 2 alpha, 1 beta, 1 beta' and 1 omega subunit. When a sigma factor is associated with the core the holoenzyme is formed, which can initiate transcription.

The enzyme catalyses RNA(n) + a ribonucleoside 5'-triphosphate = RNA(n+1) + diphosphate. Its function is as follows. DNA-dependent RNA polymerase catalyzes the transcription of DNA into RNA using the four ribonucleoside triphosphates as substrates. The protein is DNA-directed RNA polymerase subunit beta of Mesorhizobium japonicum (strain LMG 29417 / CECT 9101 / MAFF 303099) (Mesorhizobium loti (strain MAFF 303099)).